Reading from the N-terminus, the 228-residue chain is Glucose-induced degradation protein 8-A homolog (228 aa).

The 33-residue stretch at 25-57 folds into the LisH domain; that stretch reads QRADMNRLIMNYLVTEGFKEAAEKFRMESGIEP. Positions 63–120 constitute a CTLH domain; the sequence is SLDERIKIREMVLKGQIQEAIALINSLHPELLDTNRYLYFHLQQQHLIELIRLRETEA.

The protein belongs to the GID8 family. In terms of assembly, identified in the CTLH complex that contains at least MAEA, RMND5A (or alternatively its paralog RMND5B), GID8, WDR26, and RANBP9 and/or RANBP10. Interacts with CTNNB1.

Functionally, core component of the CTLH E3 ubiquitin-protein ligase complex that selectively accepts ubiquitin from UBE2H and mediates ubiquitination and subsequent proteasomal degradation of target proteins. Acts as a positive regulator of Wnt signaling pathway by promoting beta-catenin (CTNNB1) nuclear accumulation. Required for normal Wnt signaling and normal dorsoventral patterning during embryogenesis. The polypeptide is Glucose-induced degradation protein 8-A homolog (gid8a) (Danio rerio (Zebrafish)).